The following is a 123-amino-acid chain: MIQPQTLLNVADNSGARKLMCIRVIGAASNQRYARIGDVIVAVIKDAVPQMPLERSEVIRAVIVRTCKEFKCEDGIIIRYDDNAAVIIDQKGNPKGTRVFGAIAEELRELNFTKIVSLAPEVL.

The protein belongs to the universal ribosomal protein uL14 family. In terms of assembly, part of the 50S ribosomal subunit.

It is found in the plastid. It localises to the chloroplast. Binds to 23S rRNA. This Oryza nivara (Indian wild rice) protein is Large ribosomal subunit protein uL14c.